The primary structure comprises 189 residues: Potassium-transporting ATPase KdpC subunit (189 aa).

The helical transmembrane segment at 10 to 30 threads the bilayer; the sequence is VIFAMLTLICGVIYPYAITGI.

This sequence belongs to the KdpC family. The system is composed of three essential subunits: KdpA, KdpB and KdpC.

Its subcellular location is the cell inner membrane. Part of the high-affinity ATP-driven potassium transport (or Kdp) system, which catalyzes the hydrolysis of ATP coupled with the electrogenic transport of potassium into the cytoplasm. This subunit acts as a catalytic chaperone that increases the ATP-binding affinity of the ATP-hydrolyzing subunit KdpB by the formation of a transient KdpB/KdpC/ATP ternary complex. The chain is Potassium-transporting ATPase KdpC subunit from Janthinobacterium sp. (strain Marseille) (Minibacterium massiliensis).